We begin with the raw amino-acid sequence, 1281 residues long: Dynactin subunit 1 (1281 aa).

The interval 1-25 (MAQSKRHVYSRTPSGSRMSAEASAR) is disordered. The CAP-Gly domain maps to 48-90 (GATLFATGKWVGVILDEAKGKNDGTVQGRKYFTCDEGHGIFVR). Positions 99–225 (DGADTTSPET…EEEGLRAQVR (127 aa)) are disordered. Over residues 102-114 (DTTSPETPDSSAS) the composition is skewed to polar residues. A phosphothreonine mark is found at Thr108, Thr145, Thr146, and Thr147. The span at 129–152 (SKLRGPKPKKAPTARKTTTRRPKP) shows a compositional bias: basic residues. Residues 161–205 (AGASSSLGPSGSASAGELSSSEPSTPAQTPLAAPIIPTPALTSPG) show a composition bias toward low complexity. Ser179 and Ser212 each carry phosphoserine. Over residues 214–225 (SKEEEGLRAQVR) the composition is skewed to basic and acidic residues. 2 coiled-coil regions span residues 217–540 (EEGL…QQEA) and 952–1043 (IKEL…QSKR). Positions 911–1281 (EYDAERPPSK…LHQLHDRLIS (371 aa)) are interaction with HPS6. The disordered stretch occupies residues 1065–1084 (GEEQQRGGAPGQAPGIVPGP).

This sequence belongs to the dynactin 150 kDa subunit family. As to quaternary structure, monomer and homodimer. Subunit of dynactin, a multiprotein complex part of a tripartite complex with dynein and a adapter, such as BICDL1, BICD2 or HOOK3. The dynactin complex is built around ACTR1A/ACTB filament and consists of an actin-related filament composed of a shoulder domain, a pointed end and a barbed end. Its length is defined by its flexible shoulder domain. The soulder is composed of 2 DCTN1 subunits, 4 DCTN2 and 2 DCTN3. DCTN1/p150(glued) binds directly to microtubules and to cytoplasmic dynein. The 4 DCNT2 (via N-terminus) bind the ACTR1A filament and act as molecular rulers to determine the length. The pointed end is important for binding dynein-dynactin cargo adapters. Consists of 4 subunits: ACTR10, DCNT4, DCTN5 and DCTN6. The barbed end is composed of a CAPZA1:CAPZB heterodimers, which binds ACTR1A/ACTB filament and dynactin and stabilizes dynactin. Interacts with the C-terminus of MAPRE1, MAPRE2 and MAPRE3. Interacts (via C-terminus) with SNX6. Interacts with CLN3, DYNAP, ECPAS and FBXL5. Interacts with MISP; this interaction regulates its distribution at the cell cortex. Interacts with CEP131. Interacts with CEP126. Interacts with CLIP1. Interacts with dynein intermediate chain and dynein heavy chain. Interacts with PLK1 (via POLO-box domain). Interacts with TBCB. Binds preferentially to tyrosinated microtubules than to detyrosinated microtubules. Interacts with PARD6A. Interacts with HPS6. Interacts with KIF3A. Interacts with BICD2. Interacts with DST (isoform 9). Interacts with DST (isoform 1). Identified in a complex with MREG and RILP. Interacts with BCCIP (isoform 2/alpha). Interacts with DCDC1. Interacts with AKNA. Interacts with DYNC1I2. Interacts with RUFY3 and RUFY4. Ubiquitinated by a SCF complex containing FBXL5, leading to its degradation by the proteasome. In terms of processing, phosphorylation by SLK at Thr-145, Thr-146 and Thr-147 targets DCTN1 to the centrosome. It is uncertain if SLK phosphorylates all three threonines or one or two of them. PLK1-mediated phosphorylation at Ser-179 is essential for its localization in the nuclear envelope, promotes its dissociation from microtubules during early mitosis and positively regulates nuclear envelope breakdown during prophase.

The protein resides in the cytoplasm. It is found in the cytoskeleton. It localises to the microtubule organizing center. Its subcellular location is the centrosome. The protein localises to the centriole. The protein resides in the spindle. It is found in the nucleus envelope. It localises to the cell cortex. Functionally, part of the dynactin complex that activates the molecular motor dynein for ultra-processive transport along microtubules. Plays a key role in dynein-mediated retrograde transport of vesicles and organelles along microtubules by recruiting and tethering dynein to microtubules. Binds to both dynein and microtubules providing a link between specific cargos, microtubules and dynein. Essential for targeting dynein to microtubule plus ends, recruiting dynein to membranous cargos and enhancing dynein processivity (the ability to move along a microtubule for a long distance without falling off the track). Can also act as a brake to slow the dynein motor during motility along the microtubule. Can regulate microtubule stability by promoting microtubule formation, nucleation and polymerization and by inhibiting microtubule catastrophe in neurons. Inhibits microtubule catastrophe by binding both to microtubules and to tubulin, leading to enhanced microtubule stability along the axon. Plays a role in metaphase spindle orientation. Plays a role in centriole cohesion and subdistal appendage organization and function. Its recruitment to the centriole in a KIF3A-dependent manner is essential for the maintenance of centriole cohesion and the formation of subdistal appendage. Also required for microtubule anchoring at the mother centriole. Plays a role in primary cilia formation. The polypeptide is Dynactin subunit 1 (DCTN1) (Sus scrofa (Pig)).